The sequence spans 284 residues: Protein phosphatase 1 regulatory subunit 3B (284 aa).

The PP1-binding motif motif lies at 61-64 (RVSF). The 109-residue stretch at 124 to 232 (RNRLQTDHVC…SNKGKNYRII (109 aa)) folds into the CBM21 domain. At serine 260 the chain carries Phosphoserine.

As to quaternary structure, interacts with glycogen, PPP1CC catalytic subunit of PP1 and PYGL. Associates with glycogen particles. Forms complexes with debranching enzyme, glycogen phosphorylase, glycogen synthase and phosphorylase kinase which is necessary for its regulation of PP1 activity.

Functionally, acts as a glycogen-targeting subunit for phosphatase PP1. Facilitates interaction of the PP1 with enzymes of the glycogen metabolism and regulates its activity. Suppresses the rate at which PP1 dephosphorylates (inactivates) glycogen phosphorylase and enhances the rate at which it activates glycogen synthase and therefore limits glycogen breakdown. Its activity is inhibited by PYGL, resulting in inhibition of the glycogen synthase and glycogen phosphorylase phosphatase activities of PP1. Dramatically increases basal and insulin-stimulated glycogen synthesis upon overexpression in hepatocytes. This is Protein phosphatase 1 regulatory subunit 3B (PPP1R3B) from Bos taurus (Bovine).